The following is a 425-amino-acid chain: Serine--tRNA ligase (425 aa).

231–233 (TAE) is an L-serine binding site. ATP is bound at residue 262-264 (RSE). Glutamate 285 is an L-serine binding site. An ATP-binding site is contributed by 349–352 (EISS). Residue serine 385 participates in L-serine binding.

It belongs to the class-II aminoacyl-tRNA synthetase family. Type-1 seryl-tRNA synthetase subfamily. As to quaternary structure, homodimer. The tRNA molecule binds across the dimer.

The protein localises to the cytoplasm. The enzyme catalyses tRNA(Ser) + L-serine + ATP = L-seryl-tRNA(Ser) + AMP + diphosphate + H(+). The catalysed reaction is tRNA(Sec) + L-serine + ATP = L-seryl-tRNA(Sec) + AMP + diphosphate + H(+). It functions in the pathway aminoacyl-tRNA biosynthesis; selenocysteinyl-tRNA(Sec) biosynthesis; L-seryl-tRNA(Sec) from L-serine and tRNA(Sec): step 1/1. Its function is as follows. Catalyzes the attachment of serine to tRNA(Ser). Is also able to aminoacylate tRNA(Sec) with serine, to form the misacylated tRNA L-seryl-tRNA(Sec), which will be further converted into selenocysteinyl-tRNA(Sec). This is Serine--tRNA ligase from Halalkalibacterium halodurans (strain ATCC BAA-125 / DSM 18197 / FERM 7344 / JCM 9153 / C-125) (Bacillus halodurans).